A 496-amino-acid polypeptide reads, in one-letter code: Probable cytosol aminopeptidase (496 aa).

The Mn(2+) site is built by Lys-251 and Asp-256. Lys-263 is a catalytic residue. Mn(2+) is bound by residues Asp-274, Asp-333, and Glu-335. Residue Arg-337 is part of the active site.

Belongs to the peptidase M17 family. Requires Mn(2+) as cofactor.

It localises to the cytoplasm. The catalysed reaction is Release of an N-terminal amino acid, Xaa-|-Yaa-, in which Xaa is preferably Leu, but may be other amino acids including Pro although not Arg or Lys, and Yaa may be Pro. Amino acid amides and methyl esters are also readily hydrolyzed, but rates on arylamides are exceedingly low.. The enzyme catalyses Release of an N-terminal amino acid, preferentially leucine, but not glutamic or aspartic acids.. In terms of biological role, presumably involved in the processing and regular turnover of intracellular proteins. Catalyzes the removal of unsubstituted N-terminal amino acids from various peptides. The sequence is that of Probable cytosol aminopeptidase from Acidovorax ebreus (strain TPSY) (Diaphorobacter sp. (strain TPSY)).